A 341-amino-acid chain; its full sequence is UDP-N-acetyl-alpha-D-glucosaminouronate 4-epimerase (341 aa).

9 residues coordinate NAD(+): phenylalanine 27, isoleucine 28, aspartate 47, alanine 50, threonine 51, glycine 52, aspartate 78, isoleucine 79, and glutamine 98. Serine 103 contributes to the UDP-N-acetyl-alpha-D-galactosamine binding site. Threonine 117 is a binding site for NAD(+). 3 residues coordinate UDP-N-acetyl-alpha-D-galactosamine: serine 142, serine 143, and tyrosine 166. NAD(+) is bound by residues tyrosine 166 and lysine 170. Tyrosine 166 functions as the Proton acceptor in the catalytic mechanism. Asparagine 195 is a UDP-N-acetyl-alpha-D-galactosamine binding site. Residue valine 196 participates in NAD(+) binding. UDP-N-acetyl-alpha-D-galactosamine is bound by residues valine 210, tyrosine 225, asparagine 227, arginine 234, arginine 299, and aspartate 302.

The protein belongs to the NAD(P)-dependent epimerase/dehydratase family. As to quaternary structure, homodimer. The cofactor is NAD(+).

The catalysed reaction is UDP-2-acetamido-2-deoxy-alpha-D-glucuronate = UDP-2-acetamido-2-deoxy-alpha-D-galacturonate. It catalyses the reaction UDP-N-acetyl-alpha-D-glucosamine = UDP-N-acetyl-alpha-D-galactosamine. The protein operates within bacterial outer membrane biogenesis; LPS O-antigen biosynthesis. Epimerase required for the biosynthesis of the B-band O antigen of serotype O6 lipopolysaccharide. Catalyzes the reversible epimerization of UDP-N-acetylglucosaminuronic acid (UDP-GlcNAcA) to UDP-N-acetylgalactosaminuronic acid (UDP-GalNAcA). Also catalyzes the reversible epimerization of UDP-N-acetylglucosamine (UDP-GlcNAc) to UDP-N-acetylgalactosamine (UDP-GalNAc). Has very low epimerase activity with UDP-glucose (UDP-Glc) and UDP-galactose (UDP-Gal). This chain is UDP-N-acetyl-alpha-D-glucosaminouronate 4-epimerase, found in Pseudomonas aeruginosa.